The following is a 1188-amino-acid chain: Meiotically up-regulated gene 190 protein (1188 aa).

Positions 1–11 (MSTHSGDSTKQ) are enriched in polar residues. Disordered regions lie at residues 1–61 (MSTH…DPIT) and 83–125 (FTVP…EADN). The segment covering 41–61 (EKKEEQQREQTENEKLFDPIT) has biased composition (basic and acidic residues). Over residues 84 to 112 (TVPNQSIQGSSLPSEKPYLSSNQPTNVYK) the composition is skewed to polar residues. Residues 173–193 (LVISWFFTHSIIISAVLPLAI) form a helical membrane-spanning segment. Residues 228–453 (IPESAEWMNH…SPKSMTIDLS (226 aa)) form the SMP-LTD domain. The segment at 298-318 (ASESFSEKQASEAEHKDEPEQ) is disordered. The segment covering 302–318 (FSEKQASEAEHKDEPEQ) has biased composition (basic and acidic residues). C2 domains follow at residues 451-576 (DLSK…ERCD) and 636-781 (KEEE…TKWY). Ca(2+) contacts are provided by Asp-485, Asp-491, Asp-544, Asp-546, Ser-549, and Asp-552. 2 disordered regions span residues 615 to 639 (TIPRSMRDDPAFQNPHGSLDNKEEE) and 1002 to 1066 (QRAS…GTMN). Phosphoserine is present on Ser-1005. Acidic residues predominate over residues 1022–1032 (DDSVDTEDEET).

Ca(2+) serves as cofactor.

The protein localises to the cytoplasm. It is found in the endoplasmic reticulum membrane. It localises to the nucleus membrane. Its subcellular location is the cytoskeleton. The protein resides in the microtubule organizing center. The protein localises to the spindle pole body. In terms of biological role, has a role in meiosis. The polypeptide is Meiotically up-regulated gene 190 protein (mug190) (Schizosaccharomyces pombe (strain 972 / ATCC 24843) (Fission yeast)).